Here is a 953-residue protein sequence, read N- to C-terminus: Protein translocase subunit SecA (953 aa).

ATP contacts are provided by residues Q84, 102 to 106 (GEGKT), and D491. Residues 832-953 (EPEPAPEQPS…RAEAKKNKRR (122 aa)) are disordered. Low complexity predominate over residues 841 to 865 (SVPVSVSRSAEPTPDLQAAAEAAAA). Basic and acidic residues predominate over residues 898–907 (KGLDAPEKQR). The segment covering 908–934 (LNYSGPTEQGGVQTTSESAGEQGNGTS) has biased composition (polar residues). Residues 940 to 953 (RAAARAEAKKNKRR) are compositionally biased toward basic and acidic residues.

The protein belongs to the SecA family. As to quaternary structure, monomer and homodimer. Part of the essential Sec protein translocation apparatus which comprises SecA, SecYEG and auxiliary proteins SecDF. Other proteins may also be involved.

It localises to the cell membrane. The protein resides in the cytoplasm. The catalysed reaction is ATP + H2O + cellular proteinSide 1 = ADP + phosphate + cellular proteinSide 2.. Part of the Sec protein translocase complex. Interacts with the SecYEG preprotein conducting channel. Has a central role in coupling the hydrolysis of ATP to the transfer of proteins into and across the cell membrane, serving as an ATP-driven molecular motor driving the stepwise translocation of polypeptide chains across the membrane. The sequence is that of Protein translocase subunit SecA from Saccharopolyspora erythraea (strain ATCC 11635 / DSM 40517 / JCM 4748 / NBRC 13426 / NCIMB 8594 / NRRL 2338).